Here is a 769-residue protein sequence, read N- to C-terminus: DNA helicase/primase complex-associated protein (769 aa).

It belongs to the herpesviridae HEPA family. In terms of assembly, associates with the primase and the helicase to form the helicase-primase complex. Interacts with the origin-binding protein. Interacts with the polymerase catalytic subunit.

Its subcellular location is the host nucleus. Component of the helicase/primase complex. Unwinds the DNA at the replication forks and generates single-stranded DNA for both leading and lagging strand synthesis. The primase synthesizes short RNA primers on the lagging strand that the polymerase presumably elongates using dNTPs. The primase-associated factor has no known catalytic activity in the complex and may serve to facilitate the formation of the replisome by directly interacting with the origin-binding protein and the polymerase. This chain is DNA helicase/primase complex-associated protein (MDV020), found in Gallus gallus (Chicken).